Here is a 177-residue protein sequence, read N- to C-terminus: Large ribosomal subunit protein uL6 (177 aa).

This sequence belongs to the universal ribosomal protein uL6 family. Part of the 50S ribosomal subunit.

Functionally, this protein binds to the 23S rRNA, and is important in its secondary structure. It is located near the subunit interface in the base of the L7/L12 stalk, and near the tRNA binding site of the peptidyltransferase center. In Bartonella bacilliformis (strain ATCC 35685 / KC583 / Herrer 020/F12,63), this protein is Large ribosomal subunit protein uL6.